Consider the following 548-residue polypeptide: Nonribosomal peptide synthetase 8 (548 aa).

The Carrier domain occupies 1-77; it reads MNSLDQWRDT…QLRGENRSGP (77 aa). O-(pantetheine 4'-phosphoryl)serine is present on Ser-35. The segment at 122 to 537 is condensation; it reads MAPISSIQEF…FKSLIAELAA (416 aa).

The protein belongs to the NRP synthetase family.

It participates in mycotoxin biosynthesis. Its function is as follows. Nonribosomal peptide synthetase; part of the gene cluster that mediates the biosynthesis of fumonisins B1 (FB1), B2 (FB2), B3 (FB3), and B4 (FB4), which are carcinogenic mycotoxins. Within the pathway FUM14 catalyzes esterification of CoA-activated tricarballylic acid to the C-14 and C-15 hydroxyls of the fumonisin backbone. The biosynthesis starts with the FUM1-catalyzed carbon chain assembly from one molecule of acetyl-CoA, eight molecules of malonyl-CoA, and two molecules of methionine (in S-adenosyl form). The C18 polyketide chain is released from the enzyme by a nucleophilic attack of a carbanion, which is derived from R-carbon of alanine by decarboxylation, on the carbonyl carbon of polyketide acyl chain. This step is catalyzed by the pyridoxal 5'-phosphate-dependent aminoacyl transferase FUM8. The resultant 3-keto intermediate is then stereospecifically reduced to a 3-hydroxyl product by reductase FUM13. Subsequent oxidations at C-10 by the cytochrome P450 monooxygenase FUM2, C-14 and C-15 by FUM6, FUM12 or FUM15, tricarballylic esterification of the hydroxyl groups on C-14 and C-15 by acyltransferase FUM14, and C-5 hydroxylation by 2-keto-glutarate-dependent dioxygenase FUM3 furnish the biosynthesis of fumonisins. The tricarballylic moieties are most likely derived from the citric acid cycle, and their addition to the carbon backbone may involve FUM7, FUM10, FUM11 and FUM14. This Gibberella moniliformis (strain M3125 / FGSC 7600) (Maize ear and stalk rot fungus) protein is Nonribosomal peptide synthetase 8.